A 206-amino-acid chain; its full sequence is MSRSLHDQTLALAGLCQAATLVQQIAHNGNCNEDSLETCIRSLFATNPASTLDVYGGELSDIREGLTVLSTVLAQHGQPQDVEILRYMFNLIQLEAKLKRSPDMLDVIGNRIEQARHTASHFGYSHSNLLGNLASIYADTISTFRLRIQVTGNPQILQRNENADKVRALLLAGIRSAVLWRQSGGHRWQLIFTRKKVISHARELLR.

The protein belongs to the HflD family.

The protein resides in the cytoplasm. Its subcellular location is the cell inner membrane. The chain is High frequency lysogenization protein HflD homolog from Marinobacter nauticus (strain ATCC 700491 / DSM 11845 / VT8) (Marinobacter aquaeolei).